The following is a 256-amino-acid chain: Deoxyribose-phosphate aldolase (256 aa).

Asp102 acts as the Proton donor/acceptor in catalysis. The Schiff-base intermediate with acetaldehyde role is filled by Lys165. Lys197 serves as the catalytic Proton donor/acceptor.

This sequence belongs to the DeoC/FbaB aldolase family. DeoC type 2 subfamily.

It is found in the cytoplasm. It catalyses the reaction 2-deoxy-D-ribose 5-phosphate = D-glyceraldehyde 3-phosphate + acetaldehyde. Its pathway is carbohydrate degradation; 2-deoxy-D-ribose 1-phosphate degradation; D-glyceraldehyde 3-phosphate and acetaldehyde from 2-deoxy-alpha-D-ribose 1-phosphate: step 2/2. In terms of biological role, catalyzes a reversible aldol reaction between acetaldehyde and D-glyceraldehyde 3-phosphate to generate 2-deoxy-D-ribose 5-phosphate. This Shewanella oneidensis (strain ATCC 700550 / JCM 31522 / CIP 106686 / LMG 19005 / NCIMB 14063 / MR-1) protein is Deoxyribose-phosphate aldolase.